The sequence spans 89 residues: MAHKKGTGSTRNGRDSNSKRLGVKAYGGESVTAGSILIRQRGTSVLPGVNVGQGKDDTLFALTDGVVKFETIRRGLRNRKRINVATAAG.

Residues 1 to 24 (MAHKKGTGSTRNGRDSNSKRLGVK) are disordered.

The protein belongs to the bacterial ribosomal protein bL27 family.

The sequence is that of Large ribosomal subunit protein bL27 from Synechococcus sp. (strain WH7803).